Here is a 1029-residue protein sequence, read N- to C-terminus: Beta-galactosidase 2 (1029 aa).

Substrate-binding residues include Asn104 and Asp203. Asp203 lines the Na(+) pocket. Mg(2+) is bound by residues Glu418, His420, and Glu463. Residues Glu463 and 539-542 (EYAH) contribute to the substrate site. Glu463 functions as the Proton donor in the catalytic mechanism. Catalysis depends on Glu539, which acts as the Nucleophile. Asn599 is a binding site for Mg(2+). 2 residues coordinate Na(+): Phe603 and Asn606. Positions 606 and 1004 each coordinate substrate.

This sequence belongs to the glycosyl hydrolase 2 family. Homotetramer. It depends on Mg(2+) as a cofactor. Na(+) is required as a cofactor.

The catalysed reaction is Hydrolysis of terminal non-reducing beta-D-galactose residues in beta-D-galactosides.. The polypeptide is Beta-galactosidase 2 (Enterobacter cloacae).